Here is a 310-residue protein sequence, read N- to C-terminus: p-hydroxybenzoic acid efflux pump subunit AaeA (310 aa).

A helical membrane pass occupies residues 12-32 (AITVALVILAFIAISRAWVFY).

This sequence belongs to the membrane fusion protein (MFP) (TC 8.A.1) family.

The protein resides in the cell inner membrane. Its function is as follows. Forms an efflux pump with AaeB. This chain is p-hydroxybenzoic acid efflux pump subunit AaeA, found in Enterobacter sp. (strain 638).